A 382-amino-acid chain; its full sequence is Threonine synthase (382 aa).

K93 is subject to N6-(pyridoxal phosphate)lysine. Residues N119, 219 to 223 (GNAGN), and T347 contribute to the pyridoxal 5'-phosphate site.

It belongs to the threonine synthase family. Requires pyridoxal 5'-phosphate as cofactor.

It catalyses the reaction O-phospho-L-homoserine + H2O = L-threonine + phosphate. The protein operates within amino-acid biosynthesis; L-threonine biosynthesis; L-threonine from L-aspartate: step 5/5. In terms of biological role, catalyzes the gamma-elimination of phosphate from L-phosphohomoserine and the beta-addition of water to produce L-threonine. The protein is Threonine synthase (thrC) of Synechocystis sp. (strain ATCC 27184 / PCC 6803 / Kazusa).